Here is a 381-residue protein sequence, read N- to C-terminus: Gustatory and pheromone receptor 39a, isoform D (381 aa).

The Cytoplasmic portion of the chain corresponds to 1-43 (MKRNAFEELRVQLRTLKWLGVLRFTIDFNKCLVRENASEERSA). A helical membrane pass occupies residues 44 to 64 (WLYLIGVVGITCSLIVYSTYF). Residues 65-78 (PSHFIMGKHNTTGN) are Extracellular-facing. A glycan (N-linked (GlcNAc...) asparagine) is linked at asparagine 74. A helical membrane pass occupies residues 79–101 (CYALINIRSCSIVTMLIYTQLYI). The Cytoplasmic segment spans residues 102 to 128 (QRFRFVALLQSILRFNQISGSHREEGR). Residues 129–149 (FAFYYYTHLSLLIICMLNYAY) traverse the membrane as a helical segment. The Extracellular portion of the chain corresponds to 150-172 (GYWTAGVRLTTIPIYLLQYGFSY). The chain crosses the membrane as a helical span at residues 173-193 (LFLGQVVVLFACIQQILLSIL). At 194–234 (KYYNQVVLKNIKSSKESREFYYNFCKYNQVIWLSYTEINHC) the chain is on the cytoplasmic side. A helical membrane pass occupies residues 235-255 (FGLLLLLVTGLILLITPSGPF). Over 256–273 (YLVSTIFEGRFRQNWQFS) the chain is Extracellular. The chain crosses the membrane as a helical span at residues 274 to 294 (LMSFTAILWSLPWIVLLVLAM). The Cytoplasmic segment spans residues 295–350 (GRNDVQKEANKTAKMLTKVPRTGTGLDRMIEKFLLKNLRQKPILTAYGFFALDKST). A helical transmembrane segment spans residues 351 to 371 (LFKLFTAIFTYMVILVQFKEM). Residues 372-381 (ENSTKSINKF) lie on the Extracellular side of the membrane. The N-linked (GlcNAc...) asparagine glycan is linked to asparagine 373.

This sequence belongs to the insect chemoreceptor superfamily. Gustatory receptor (GR) family. Gr21a subfamily. Expressed in the adult labellar chemosensory neurons and adult thorax and abdomen.

It is found in the cell membrane. Its function is as follows. Gustatory receptor which mediates acceptance or avoidance behavior, depending on its substrates. Plays a role in sustaining courtship behavior in males, possibly through the reception of a stimulating arrestant pheromone. The polypeptide is Gustatory and pheromone receptor 39a, isoform D (Gr39a) (Drosophila melanogaster (Fruit fly)).